Here is a 146-residue protein sequence, read N- to C-terminus: uncharacterized protein (146 aa).

This is an uncharacterized protein from Acidianus filamentous virus 2 (isolate Italy/Pozzuoli) (AFV-2).